A 537-amino-acid chain; its full sequence is CTP synthase (537 aa).

Residues 1–268 (MSFKCIFLTG…STFITEKLGL (268 aa)) form an amidoligase domain region. Residue Ser-14 participates in CTP binding. Ser-14 provides a ligand contact to UTP. 15 to 20 (SLGKGL) contacts ATP. Tyr-55 is a binding site for L-glutamine. Asp-72 is a binding site for ATP. 2 residues coordinate Mg(2+): Asp-72 and Glu-142. CTP is bound by residues 149–151 (DIE), 188–193 (KTKPTQ), and Lys-224. Residues 188 to 193 (KTKPTQ) and Lys-224 each bind UTP. Residues 294 to 533 (RLGLVGKYVQ…IEAALLHSRN (240 aa)) enclose the Glutamine amidotransferase type-1 domain. Gly-353 is a binding site for L-glutamine. Cys-380 (nucleophile; for glutamine hydrolysis) is an active-site residue. Residues 381–384 (LGMQ), Glu-404, and Arg-461 each bind L-glutamine. Catalysis depends on residues His-506 and Glu-508.

This sequence belongs to the CTP synthase family. As to quaternary structure, homotetramer.

It carries out the reaction UTP + L-glutamine + ATP + H2O = CTP + L-glutamate + ADP + phosphate + 2 H(+). The catalysed reaction is L-glutamine + H2O = L-glutamate + NH4(+). It catalyses the reaction UTP + NH4(+) + ATP = CTP + ADP + phosphate + 2 H(+). It functions in the pathway pyrimidine metabolism; CTP biosynthesis via de novo pathway; CTP from UDP: step 2/2. Its activity is regulated as follows. Allosterically activated by GTP, when glutamine is the substrate; GTP has no effect on the reaction when ammonia is the substrate. The allosteric effector GTP functions by stabilizing the protein conformation that binds the tetrahedral intermediate(s) formed during glutamine hydrolysis. Inhibited by the product CTP, via allosteric rather than competitive inhibition. Functionally, catalyzes the ATP-dependent amination of UTP to CTP with either L-glutamine or ammonia as the source of nitrogen. Regulates intracellular CTP levels through interactions with the four ribonucleotide triphosphates. The protein is CTP synthase of Chlamydia abortus (strain DSM 27085 / S26/3) (Chlamydophila abortus).